Here is a 536-residue protein sequence, read N- to C-terminus: Light-independent protochlorophyllide reductase subunit B (536 aa).

Asp36 is a [4Fe-4S] cluster binding site. Asp292 acts as the Proton donor in catalysis. 427–428 serves as a coordination point for substrate; the sequence is GL. Low complexity predominate over residues 448 to 469; that stretch reads SHLGHLGGHQSQTEQQQSQAAT. The segment at 448 to 489 is disordered; the sequence is SHLGHLGGHQSQTEQQQSQAATNPSTQSNADSSSEESPLWTP. A compositionally biased stretch (polar residues) spans 470-483; sequence NPSTQSNADSSSEE.

The protein belongs to the ChlB/BchB/BchZ family. In terms of assembly, protochlorophyllide reductase is composed of three subunits; ChlL, ChlN and ChlB. Forms a heterotetramer of two ChlB and two ChlN subunits. [4Fe-4S] cluster is required as a cofactor.

The catalysed reaction is chlorophyllide a + oxidized 2[4Fe-4S]-[ferredoxin] + 2 ADP + 2 phosphate = protochlorophyllide a + reduced 2[4Fe-4S]-[ferredoxin] + 2 ATP + 2 H2O. Its pathway is porphyrin-containing compound metabolism; chlorophyll biosynthesis (light-independent). Its function is as follows. Component of the dark-operative protochlorophyllide reductase (DPOR) that uses Mg-ATP and reduced ferredoxin to reduce ring D of protochlorophyllide (Pchlide) to form chlorophyllide a (Chlide). This reaction is light-independent. The NB-protein (ChlN-ChlB) is the catalytic component of the complex. The protein is Light-independent protochlorophyllide reductase subunit B of Prochlorococcus marinus (strain MIT 9313).